We begin with the raw amino-acid sequence, 144 residues long: Eukaryotic translation initiation factor 1A (144 aa).

The segment covering methionine 1–glycine 15 has biased composition (basic residues). Disordered stretches follow at residues methionine 1–leucine 26 and lysine 114–isoleucine 144. The span at lysine 16–leucine 26 shows a compositional bias: basic and acidic residues. The S1-like domain occupies glutamate 22–asparagine 96. Residues glycine 124 to isoleucine 144 are compositionally biased toward acidic residues.

This sequence belongs to the eIF-1A family. In terms of assembly, component of the 43S pre-initiation complex (43S PIC), which is composed of the 40S ribosomal subunit, EIF1, eIF1A (EIF1AX), eIF3 complex, EIF5 and eIF2-GTP-initiator tRNA complex (eIF2 ternary complex). Interacts with EIF5; this interaction contributes to the maintenance of EIF1 within the open 43S PIC. Interacts through its C-terminal domain (CTD) with the CTD of EIF5B; from the location of the start codon by the 43S complex until the formation of the 80S complex.

It is found in the cytoplasm. In terms of biological role, component of the 43S pre-initiation complex (43S PIC), which binds to the mRNA cap-proximal region, scans mRNA 5'-untranslated region, and locates the initiation codon. This protein enhances formation of the cap-proximal complex. Together with EIF1, facilitates scanning, start codon recognition, promotion of the assembly of 48S complex at the initiation codon (43S PIC becomes 48S PIC after the start codon is reached), and dissociation of aberrant complexes. After start codon location, together with EIF5B orients the initiator methionine-tRNA in a conformation that allows 60S ribosomal subunit joining to form the 80S initiation complex. Is released after 80S initiation complex formation, just after GTP hydrolysis by EIF5B, and before release of EIF5B. Its globular part is located in the A site of the 40S ribosomal subunit. Its interaction with EIF5 during scanning contribute to the maintenance of EIF1 within the open 43S PIC. In contrast to yeast orthologs, does not bind EIF1. The chain is Eukaryotic translation initiation factor 1A (Eif1a) from Mus musculus (Mouse).